Here is a 550-residue protein sequence, read N- to C-terminus: Chaperonin GroEL (550 aa).

ATP contacts are provided by residues 30 to 33 (TLGP), K51, 87 to 91 (DGTTT), G415, and D497.

The protein belongs to the chaperonin (HSP60) family. Forms a cylinder of 14 subunits composed of two heptameric rings stacked back-to-back. Interacts with the co-chaperonin GroES.

It localises to the cytoplasm. The enzyme catalyses ATP + H2O + a folded polypeptide = ADP + phosphate + an unfolded polypeptide.. In terms of biological role, together with its co-chaperonin GroES, plays an essential role in assisting protein folding. The GroEL-GroES system forms a nano-cage that allows encapsulation of the non-native substrate proteins and provides a physical environment optimized to promote and accelerate protein folding. This Yersinia enterocolitica serotype O:8 / biotype 1B (strain NCTC 13174 / 8081) protein is Chaperonin GroEL.